The following is a 343-amino-acid chain: Holliday junction branch migration complex subunit RuvB (343 aa).

A large ATPase domain (RuvB-L) region spans residues methionine 1 to tyrosine 182. Residues isoleucine 21, arginine 22, glycine 63, lysine 66, threonine 67, threonine 68, glutamate 129–phenylalanine 131, arginine 172, tyrosine 182, and arginine 219 each bind ATP. A Mg(2+)-binding site is contributed by threonine 67. Residues serine 183–glutamate 253 are small ATPAse domain (RuvB-S). Residues glutamate 256–serine 343 are head domain (RuvB-H). Positions 311 and 316 each coordinate DNA.

It belongs to the RuvB family. In terms of assembly, homohexamer. Forms an RuvA(8)-RuvB(12)-Holliday junction (HJ) complex. HJ DNA is sandwiched between 2 RuvA tetramers; dsDNA enters through RuvA and exits via RuvB. An RuvB hexamer assembles on each DNA strand where it exits the tetramer. Each RuvB hexamer is contacted by two RuvA subunits (via domain III) on 2 adjacent RuvB subunits; this complex drives branch migration. In the full resolvosome a probable DNA-RuvA(4)-RuvB(12)-RuvC(2) complex forms which resolves the HJ.

It localises to the cytoplasm. It catalyses the reaction ATP + H2O = ADP + phosphate + H(+). Its function is as follows. The RuvA-RuvB-RuvC complex processes Holliday junction (HJ) DNA during genetic recombination and DNA repair, while the RuvA-RuvB complex plays an important role in the rescue of blocked DNA replication forks via replication fork reversal (RFR). RuvA specifically binds to HJ cruciform DNA, conferring on it an open structure. The RuvB hexamer acts as an ATP-dependent pump, pulling dsDNA into and through the RuvAB complex. RuvB forms 2 homohexamers on either side of HJ DNA bound by 1 or 2 RuvA tetramers; 4 subunits per hexamer contact DNA at a time. Coordinated motions by a converter formed by DNA-disengaged RuvB subunits stimulates ATP hydrolysis and nucleotide exchange. Immobilization of the converter enables RuvB to convert the ATP-contained energy into a lever motion, pulling 2 nucleotides of DNA out of the RuvA tetramer per ATP hydrolyzed, thus driving DNA branch migration. The RuvB motors rotate together with the DNA substrate, which together with the progressing nucleotide cycle form the mechanistic basis for DNA recombination by continuous HJ branch migration. Branch migration allows RuvC to scan DNA until it finds its consensus sequence, where it cleaves and resolves cruciform DNA. This chain is Holliday junction branch migration complex subunit RuvB, found in Prosthecochloris aestuarii (strain DSM 271 / SK 413).